A 337-amino-acid polypeptide reads, in one-letter code: Probable dihydroorotase (337 aa).

Residues His-12, His-14, Lys-95, His-132, His-170, and Asp-240 each coordinate Zn(2+). An N6-carboxylysine modification is found at Lys-95.

The protein belongs to the metallo-dependent hydrolases superfamily. DHOase family. Class II DHOase subfamily. Zn(2+) serves as cofactor.

It carries out the reaction (S)-dihydroorotate + H2O = N-carbamoyl-L-aspartate + H(+). It participates in pyrimidine metabolism; UMP biosynthesis via de novo pathway; (S)-dihydroorotate from bicarbonate: step 3/3. In Schizosaccharomyces pombe (strain 972 / ATCC 24843) (Fission yeast), this protein is Probable dihydroorotase (ura2).